Here is an 88-residue protein sequence, read N- to C-terminus: Acylphosphatase (88 aa).

The Acylphosphatase-like domain maps to 3-88; the sequence is RLVALVKGRV…EAGLKGFHVY (86 aa). Catalysis depends on residues Arg-18 and Asn-36.

The protein belongs to the acylphosphatase family.

The enzyme catalyses an acyl phosphate + H2O = a carboxylate + phosphate + H(+). This is Acylphosphatase (acyP) from Thermus thermophilus (strain ATCC BAA-163 / DSM 7039 / HB27).